The primary structure comprises 258 residues: Regulatory protein RecX (258 aa).

The protein belongs to the RecX family.

It localises to the cytoplasm. Functionally, modulates RecA activity. In Streptococcus sanguinis (strain SK36), this protein is Regulatory protein RecX.